The sequence spans 327 residues: tRNA-modifying protein YgfZ (327 aa).

Folate is bound by residues W27 and W189.

This sequence belongs to the tRNA-modifying YgfZ family.

It is found in the cytoplasm. Its function is as follows. Folate-binding protein involved in regulating the level of ATP-DnaA and in the modification of some tRNAs. It is probably a key factor in regulatory networks that act via tRNA modification, such as initiation of chromosomal replication. This chain is tRNA-modifying protein YgfZ, found in Klebsiella pneumoniae (strain 342).